Here is a 420-residue protein sequence, read N- to C-terminus: MPGGCSRGPAAGDGRLRLARLALVLLGWVSSSSSTSSASSSSSSAPFLASAASAQPPLPDQCPALCECSEAARTVKCVNRNLTEVPTDLPLYVRNLFLTGNQLAVLPAGAFARRPPLAELAALNLSGSRLDEVRGGAFEHLPSLRQLDLSHNPLAYLSPFAFSGSNASISAPSPLVELILNHIVPPDDKRQNRSFEGMVAAALVAGRALQGLHLLELASNHFLYLPRDVLAQLPSLRYLDLSNNSLVSLTYVSFRNLTHLESLHLEDNALKVLHNGTLAELQGLPHVRVFLDNNPWVCDCHMADMVTWLKQTGVVQGKDRLTCAFPEKMRNRVLLELNSADLDCDPILPPSLQTSYVFLGIVLALIGAIFLLVLYLNRKGIKKWMHNIRDACRDHMEGYHYRYEINADPRLTNLSSNSDV.

The N-terminal stretch at 1 to 34 is a signal peptide; it reads MPGGCSRGPAAGDGRLRLARLALVLLGWVSSSSS. The Extracellular portion of the chain corresponds to 35–355; that stretch reads TSSASSSSSS…PILPPSLQTS (321 aa). An LRRNT domain is found at 53–91; the sequence is SAQPPLPDQCPALCECSEAARTVKCVNRNLTEVPTDLPL. Intrachain disulfides connect C62/C68 and C66/C77. N81 carries an N-linked (GlcNAc...) asparagine glycan. 7 LRR repeats span residues 92–113, 116–139, 141–163, 172–204, 209–232, 233–255, and 256–275; these read YVRN…AFAR, PLAE…GAFE, LPSL…FAFS, PSPL…AALV, LQGL…VLAQ, LPSL…VSFR, and NLTH…VLHN. A glycan (N-linked (GlcNAc...) asparagine) is linked at N124. An N-linked (GlcNAc...) asparagine glycan is attached at N275. The LRRCT domain maps to 283–346; the sequence is GLPHVRVFLD…LNSADLDCDP (64 aa). 2 disulfide bridges follow: C298/C323 and C300/C344. A helical transmembrane segment spans residues 356 to 376; that stretch reads YVFLGIVLALIGAIFLLVLYL. Residues 377–420 are Cytoplasmic-facing; it reads NRKGIKKWMHNIRDACRDHMEGYHYRYEINADPRLTNLSSNSDV. S418 is subject to Phosphoserine.

In terms of processing, highly glycosylated.

The protein resides in the cell membrane. May function as an inhibitor of Wnt/beta-catenin signaling by indirectly interacting with LRP6 and blocking Wnt3a-dependent LRP6 internalization. The protein is Trophoblast glycoprotein (TPBG) of Macaca fascicularis (Crab-eating macaque).